Reading from the N-terminus, the 367-residue chain is MSRKTVSRTFSSFSISVVAVAVASTFSAHAGKFNPKFLEDVQGVGQHVDLTMFEKGQEQQLPGIYRVSVYVNEQRMETRTLEFKEATEAQRKAMGESLVPCLSRTQLAEMGVRVESFPALNLVSAEACVPFDEIIPLASSHFDFSEQKLVLSFPQAAMHQVARGTVPESLWDEGIPALLLDYSFSGSNSEYDSTGSSSSYVDDNGTVHHDDGKDTLKSDSYYLNLRSGLNLGAWRLRNYSTWSHSGGKAQWDNIGTSLSRAIIPFKAQLTMGDTATAGDIFDSVQMRGAMLASDEEMLPDSQRGFAPIVRGIAKSNAEVSIEQNGYVIYRTYVQPGAFEINDLYPTANSGDLTVIIKEADGSEQRFI.

Positions 1-30 (MSRKTVSRTFSSFSISVVAVAVASTFSAHA) are cleaved as a signal peptide.

This sequence belongs to the fimbrial export usher family.

It localises to the cell outer membrane. Functionally, part of the lpfABCC'DE fimbrial operon. LP fimbriae may participate in the interaction with eukaryotic cells by assisting in microcolony formation. Could be involved in the export and assembly of the fimbrial subunits across the outer membrane. In Escherichia coli O157:H7, this protein is Probable outer membrane usher protein LpfC (lpfC).